Reading from the N-terminus, the 698-residue chain is Interleukin-17 receptor C (698 aa).

An N-terminal signal peptide occupies residues 1–21; sequence MPVSWFLLSLALGRNPVVVSL. Over 22–464 the chain is Extracellular; it reads ERLMEPQDTA…CPMDKYIHRR (443 aa). Residue Asn182 is glycosylated (N-linked (GlcNAc...) asparagine). A disulfide bridge links Cys190 with Cys202. 4 N-linked (GlcNAc...) asparagine glycosylation sites follow: Asn209, Asn249, Asn255, and Asn259. Cystine bridges form between Cys266-Cys316, Cys268-Cys284, Cys325-Cys334, Cys364-Cys378, Cys406-Cys413, and Cys440-Cys455. The helical transmembrane segment at 465 to 485 threads the bilayer; that stretch reads WVLVWLACLLLAAALFFFLLL. Residues 486-698 are Cytoplasmic-facing; the sequence is KKDRRKAARG…WDLGPCTTLE (213 aa). The 150-residue stretch at 496–645 folds into the SEFIR domain; the sequence is SRTALLLHSA…LPSQLPAFLD (150 aa).

As to quaternary structure, homodimer; disulfide-linked. Heterodimer with IL17RA. Heterodimerization with IL17RA is independent of the cytoplasmic tail. Associates with non-glycosylated IL17RA constitutively. Binding of IL17A and IL17F induces association with glycosylated IL17RA. Forms complexes with 2:1 binding stoichiometry: two receptor chains for one interleukin molecule. IL17A homodimer preferentially drives the formation of IL17RA-IL17RC heterodimeric receptor complex, whereas IL17F homodimer forms predominantly complexes with IL17RC homodimer. IL17A-IL17F forms complexes with IL17RA-IL17RC, but with lower affinity when compared to IL17A homodimer. IL17RC chain cannot distinguish between IL17A and IL17F molecules, potentially enabling the formation of topologically distinct complexes. Interacts (through SEFIR domain and extended downstream region) with TRAF3IP2/ACT1 (phosphorylated). As to expression, highly expressed in colonic epithelial cells. Expressed in lung epithelial cells. Expressed in macrophages. Highly expressed in B-1a B cells and at a lower extent in B-1b and B-2 B cells (at protein level).

The protein resides in the cell membrane. Receptor for IL17A and IL17F, major effector cytokines of innate and adaptive immune system involved in antimicrobial host defense and maintenance of tissue integrity. Receptor for IL17A and IL17F homodimers as part of a heterodimeric complex with IL17RA. Receptor for the heterodimer formed by IL17A and IL17B as part of a heterodimeric complex with IL17RA. Has also been shown to be the cognate receptor for IL17F and to bind IL17A with high affinity without the need for IL17RA. Upon binding of IL17F homodimer triggers downstream activation of TRAF6 and NF-kappa-B signaling pathway. Induces transcriptional activation of IL33, a potent cytokine that stimulates group 2 innate lymphoid cells and adaptive T-helper 2 cells involved in pulmonary allergic response to fungi. Promotes sympathetic innervation of peripheral organs by coordinating the communication between gamma-delta T cells and parenchymal cells. Stimulates sympathetic innervation of thermogenic adipose tissue by driving TGFB1 expression. Binding of IL17A-IL17F to IL17RA-IL17RC heterodimeric receptor complex triggers homotypic interaction of IL17RA and IL17RC chains with TRAF3IP2 adapter through SEFIR domains. This leads to downstream TRAF6-mediated activation of NF-kappa-B and MAPkinase pathways ultimately resulting in transcriptional activation of cytokines, chemokines, antimicrobial peptides and matrix metalloproteinases, with potential strong immune inflammation. Primarily induces neutrophil activation and recruitment at infection and inflammatory sites. Stimulates the production of antimicrobial beta-defensins DEFB1, DEFB103A, and DEFB104A by mucosal epithelial cells, limiting the entry of microbes through the epithelial barriers. This is Interleukin-17 receptor C (Il17rc) from Mus musculus (Mouse).